The following is a 227-amino-acid chain: Octanoyltransferase (227 aa).

A BPL/LPL catalytic domain is found at 35–210 (DKTPDEIWLV…TFLQLVGYSA (176 aa)). Substrate is bound by residues 74–81 (RGGQVTYH), 141–143 (SLG), and 154–156 (GLA). The active-site Acyl-thioester intermediate is Cys172.

Belongs to the LipB family.

The protein localises to the cytoplasm. The catalysed reaction is octanoyl-[ACP] + L-lysyl-[protein] = N(6)-octanoyl-L-lysyl-[protein] + holo-[ACP] + H(+). The protein operates within protein modification; protein lipoylation via endogenous pathway; protein N(6)-(lipoyl)lysine from octanoyl-[acyl-carrier-protein]: step 1/2. In terms of biological role, catalyzes the transfer of endogenously produced octanoic acid from octanoyl-acyl-carrier-protein onto the lipoyl domains of lipoate-dependent enzymes. Lipoyl-ACP can also act as a substrate although octanoyl-ACP is likely to be the physiological substrate. This Pectobacterium atrosepticum (strain SCRI 1043 / ATCC BAA-672) (Erwinia carotovora subsp. atroseptica) protein is Octanoyltransferase.